A 330-amino-acid polypeptide reads, in one-letter code: MENVNRIVAEGIAAVEAAQDFNALEQIKARYLGKTGELTGLLKTLGQMSPEERKTIGAHINECKNRFQTAFNAKRDALNEAKLQARLAAEALDITLPGRAQEGGSLHPVTLTLQRVVELFHGMGFEVADGPEIEDDFHNFQALNIPANHPARAMQDTFYVENGDVLRTHTSPIQIRYMLDKKEPPVRIIAPGRVYRVDSDATHSPMFHQAEGLWVEEGVTFADLKAVFTDFIRRFFERDDLQVRFRPSFFPFTEPSAEIDIMGENGKWLEVGGCGMVHPNVLKNVNIDPEKYTGFAFGIGLDRFAMLRYNVNDLRLFFDNDLNFLKQFVK.

Glu-254 provides a ligand contact to Mg(2+).

Belongs to the class-II aminoacyl-tRNA synthetase family. Phe-tRNA synthetase alpha subunit type 1 subfamily. Tetramer of two alpha and two beta subunits. Mg(2+) is required as a cofactor.

It is found in the cytoplasm. It catalyses the reaction tRNA(Phe) + L-phenylalanine + ATP = L-phenylalanyl-tRNA(Phe) + AMP + diphosphate + H(+). This Neisseria meningitidis serogroup A / serotype 4A (strain DSM 15465 / Z2491) protein is Phenylalanine--tRNA ligase alpha subunit (pheS).